Reading from the N-terminus, the 515-residue chain is MSTKRRKTSDEPSALKKAAAPSAPELKKEKKVKDKSTKDKSSTKKTEKTEKKQDAPEPAEESTPATNSTEEDSVTLDVAPEQEEVETVKKTFKDLGIVDALCEACERLGYKNPTPIQEQSIPLALQNRDIIGIAETGSGKTAAFALPILQALLDKPAPLFALVLAPTRELAAQIAQAFEALGSLISLRCALILGGMDMVTQAIALGKKPHVIVATPGRLLDHLEKTKGFSLRSMQYLVMDEADRLLDMDFGPILEKILKFLPRERRTFLFSATMSSKVESLQRASLRDPLKVSVSSNKYATVSTLKSNYVFIPHMHKDTYLVYLCNEFAGQTIIIFTRTVLETQRIAILLRTLGMGAIPLHGGLSQSARLGALNKFRAGSREILVATDVAARGLDIPNVDCVINHDLPQDSKTYVHRVGRTARAGKSGHAISIVTQYDLEIWLRIEAALGHKLDEYPLEKDEVMVFKPRVEEAQRHARNEMKSLMENQGKHGGLLKRKRGNGQGGGRDHMDAEEG.

The segment at methionine 1 to valine 85 is disordered. The segment covering leucine 15 to proline 24 has biased composition (low complexity). Residues glutamate 25 to alanine 55 are compositionally biased toward basic and acidic residues. Positions threonine 69–valine 85 are enriched in acidic residues. The Q motif signature appears at lysine 90–glutamate 118. The region spanning isoleucine 121 to valine 292 is the Helicase ATP-binding domain. Alanine 134–threonine 141 contacts ATP. The short motif at aspartate 240–aspartate 243 is the DEAD box element. A Helicase C-terminal domain is found at histidine 316 to methionine 464. The segment at lysine 482–glycine 515 is disordered. Residues glycine 506–glycine 515 are compositionally biased toward basic and acidic residues.

This sequence belongs to the DEAD box helicase family. DDX47/RRP3 subfamily.

It is found in the nucleus. Its function is as follows. Required for pre-ribosomal RNA processing. Involved in the maturation of the 35S-pre-rRNA and to its cleavage to mature 18S rRNA. The polypeptide is ATP-dependent rRNA helicase rrp-3 (rrp-3) (Neurospora crassa (strain ATCC 24698 / 74-OR23-1A / CBS 708.71 / DSM 1257 / FGSC 987)).